We begin with the raw amino-acid sequence, 888 residues long: MSGVNEIRSTFLDYFRKEGHEVVASSPLVPRNDPTLMFTNAGMVQFKNVFTGLEKRSYSRATTAQKSVRAGGKHNDLDNVGYTARHLTFFEMLGNFSFGDYFKERAIELAWNLITKEFGLKKDKLLVTVYHTDDEAAGFWKKIAGFSDDRIIRIATSDNFWAMGDTGPCGPCSEIFIDRGEHVWGGPPGSPEEDGDRFLEFWNLVFMQYEQVTKEERIDLPRPSIDTGMGLERMASILQGVESVFETDLFRHLIDAASSALGRAPDAETVASYRVIADHLRSSSFLVADGVLPSNEGRGYVLRRIMRRAMRHAQLLGANEPLMWKLVPALVREMGQAYPELLRGEQLVTETLKLEETRFRKTLVRGLGLLSEATETLHAGDMLDGETAFKLYDTYGFPLDLTQDALRQRNISVDLAGFTNAMEQQKAEARKHWTGSGEAATETVWFSVREQTGATEFLGYETEQAEGLIQALVKDGKTVDSAGKGDAVAVVVNQTPFYGESGGQMGDTGIISGEGFSIEISDTQKKADGLFVHLGKVASGTVKTGAAVELKVDHARRTRLRANHSATHLIHEALREVLGTHVAQKGSLVAPERLRFDISHNKPISAEELEEVERMANEIVVQNSPVTTRLMSVDDAIAEGAMALFGEKYGDEVRVVSMGTGLHGAKANRPYSVELCGGTHVRATGDIGLVRVVSDSAVAAGVRRIEALTGEAARKHLDEQDRRLKAAAATLKISPADVPARVEALLEERKKLEKDLTEARKKLALGGGAAAGAPSENETVAGVGFLGKAVSGVSPKDLKPLADAGKSSLGSGVVVFVGADEDNKASVVVAVTDDLVGRFSAVDLVRVASAALGGQGGGGRPDMAQAGGPDASKANDAIAAVKAALEAA.

H564, H568, C676, and H680 together coordinate Zn(2+).

The protein belongs to the class-II aminoacyl-tRNA synthetase family. Requires Zn(2+) as cofactor.

It is found in the cytoplasm. The catalysed reaction is tRNA(Ala) + L-alanine + ATP = L-alanyl-tRNA(Ala) + AMP + diphosphate. Its function is as follows. Catalyzes the attachment of alanine to tRNA(Ala) in a two-step reaction: alanine is first activated by ATP to form Ala-AMP and then transferred to the acceptor end of tRNA(Ala). Also edits incorrectly charged Ser-tRNA(Ala) and Gly-tRNA(Ala) via its editing domain. The chain is Alanine--tRNA ligase from Mesorhizobium japonicum (strain LMG 29417 / CECT 9101 / MAFF 303099) (Mesorhizobium loti (strain MAFF 303099)).